The sequence spans 86 residues: MVSVCRLLLVAALLLCLQAQLSFSQHWSHGWYPGGKREIDSYSSPEISGEIKLCEAGECSYLRPLRTNILKSILIDTLARKFQKRK.

The N-terminal stretch at 1-24 (MVSVCRLLLVAALLLCLQAQLSFS) is a signal peptide. A Pyrrolidone carboxylic acid modification is found at Gln-25. At Gly-34 the chain carries Glycine amide.

This sequence belongs to the GnRH family.

The protein localises to the secreted. In terms of biological role, stimulates the secretion of gonadotropins. The chain is Progonadoliberin-2 (gnrh2) from Clarias gariepinus (North African catfish).